Here is a 149-residue protein sequence, read N- to C-terminus: Deoxyuridine 5'-triphosphate nucleotidohydrolase (149 aa).

Residues 68–70 (RSG), Asn81, 85–87 (LID), and Met95 each bind substrate.

This sequence belongs to the dUTPase family. Requires Mg(2+) as cofactor.

It carries out the reaction dUTP + H2O = dUMP + diphosphate + H(+). The protein operates within pyrimidine metabolism; dUMP biosynthesis; dUMP from dCTP (dUTP route): step 2/2. This enzyme is involved in nucleotide metabolism: it produces dUMP, the immediate precursor of thymidine nucleotides and it decreases the intracellular concentration of dUTP so that uracil cannot be incorporated into DNA. This is Deoxyuridine 5'-triphosphate nucleotidohydrolase from Janthinobacterium sp. (strain Marseille) (Minibacterium massiliensis).